A 224-amino-acid chain; its full sequence is Putative N-acetylmannosamine-6-phosphate 2-epimerase (224 aa).

Belongs to the NanE family.

It catalyses the reaction an N-acyl-D-glucosamine 6-phosphate = an N-acyl-D-mannosamine 6-phosphate. The protein operates within amino-sugar metabolism; N-acetylneuraminate degradation; D-fructose 6-phosphate from N-acetylneuraminate: step 3/5. Functionally, converts N-acetylmannosamine-6-phosphate (ManNAc-6-P) to N-acetylglucosamine-6-phosphate (GlcNAc-6-P). This chain is Putative N-acetylmannosamine-6-phosphate 2-epimerase, found in Staphylococcus carnosus (strain TM300).